Reading from the N-terminus, the 530-residue chain is RNA-binding protein 39 (530 aa).

Residues 1–146 are disordered; it reads MADDIDIEAM…PVREPIDNLT (146 aa). A2 is modified (N-acetylalanine). A compositionally biased stretch (basic and acidic residues) spans 14–32; the sequence is PYKKDENKLNSANGHEERS. 2 stretches are compositionally biased toward basic residues: residues 33-56 and 64-95; these read KKRK…KERK and KKSK…RGRY. Y95 carries the phosphotyrosine modification. 2 positions are modified to phosphoserine: S97 and S100. K111 is covalently cross-linked (Glycyl lysine isopeptide (Lys-Gly) (interchain with G-Cter in SUMO2)). Residue S117 is modified to Phosphoserine. K119 participates in a covalent cross-link: Glycyl lysine isopeptide (Lys-Gly) (interchain with G-Cter in SUMO2). The span at 119–130 shows a compositional bias: basic residues; that stretch reads KLSRRRSRSKSP. 2 positions are modified to phosphoserine: S121 and S136. Residues 131–146 show a composition bias toward basic and acidic residues; sequence FRKDKSPVREPIDNLT. Position 146 is a phosphothreonine (T146). The RRM 1 domain maps to 153 to 230; that stretch reads RTVFCMQLAA…VPIIVQASQA (78 aa). K244 participates in a covalent cross-link: Glycyl lysine isopeptide (Lys-Gly) (interchain with G-Cter in SUMO2). An RRM 2 domain is found at 250-328; the sequence is MRLYVGSLHF…RPMKVGHVTE (79 aa). Residues 291 to 355 are activating domain; the sequence is KGYGFITFSD…RTGIDLGTTG (65 aa). The tract at residues 291 to 406 is interaction with JUN; that stretch reads KGYGFITFSD…IDLQTRLSQQ (116 aa). A phosphoserine mark is found at S334, S337, and S341. Residues 355-406 are interaction with ESR1 and ESR2; that stretch reads GRLQLMARLAEGTGLQIPPAAQQALQMSGSLAFGAVAEFSFVIDLQTRLSQQ. An interaction with NCOA6 region spans residues 406 to 530; the sequence is QTEASALAAA…ATQLLVPSRR (125 aa). Residues 445–508 form the RRM 3 domain; the sequence is EIKDDVIEEC…KMITAAYVPL (64 aa).

The protein belongs to the splicing factor SR family. Interacts with NCOA6 and JUN. Interacts with ESR1 and ESR2, in the presence of estradiol (E2). Interacts with RSRC1 (via Arg/Ser-rich domain). Interacts with SF3B1. Interacts with ZNF106 (via N-terminus).

Its subcellular location is the nucleus. Its function is as follows. RNA-binding protein that acts as a pre-mRNA splicing factor. Acts by promoting exon inclusion via regulation of exon cassette splicing. Also acts as a transcriptional coactivator for steroid nuclear receptors ESR1/ER-alpha and ESR2/ER-beta, and JUN/AP-1, independently of the pre-mRNA splicing factor activity. The protein is RNA-binding protein 39 (Rbm39) of Mus musculus (Mouse).